The primary structure comprises 233 residues: 5'-methylthioadenosine/S-adenosylhomocysteine nucleosidase (233 aa).

The Proton acceptor role is filled by E12. Substrate contacts are provided by residues G78, I152, and 173-174 (ME). Residue D197 is the Proton donor of the active site.

This sequence belongs to the PNP/UDP phosphorylase family. MtnN subfamily. As to quaternary structure, homodimer.

It carries out the reaction S-adenosyl-L-homocysteine + H2O = S-(5-deoxy-D-ribos-5-yl)-L-homocysteine + adenine. It catalyses the reaction S-methyl-5'-thioadenosine + H2O = 5-(methylsulfanyl)-D-ribose + adenine. The catalysed reaction is 5'-deoxyadenosine + H2O = 5-deoxy-D-ribose + adenine. The protein operates within amino-acid biosynthesis; L-methionine biosynthesis via salvage pathway; S-methyl-5-thio-alpha-D-ribose 1-phosphate from S-methyl-5'-thioadenosine (hydrolase route): step 1/2. Its function is as follows. Catalyzes the irreversible cleavage of the glycosidic bond in both 5'-methylthioadenosine (MTA) and S-adenosylhomocysteine (SAH/AdoHcy) to adenine and the corresponding thioribose, 5'-methylthioribose and S-ribosylhomocysteine, respectively. Also cleaves 5'-deoxyadenosine, a toxic by-product of radical S-adenosylmethionine (SAM) enzymes, into 5-deoxyribose and adenine. Thus, is required for in vivo function of the radical SAM enzymes biotin synthase and lipoic acid synthase, that are inhibited by 5'-deoxyadenosine accumulation. The polypeptide is 5'-methylthioadenosine/S-adenosylhomocysteine nucleosidase (Yersinia pseudotuberculosis serotype O:1b (strain IP 31758)).